The sequence spans 87 residues: Small ribosomal subunit protein uS15 (87 aa).

It belongs to the universal ribosomal protein uS15 family. Part of the 30S ribosomal subunit. Forms a bridge to the 50S subunit in the 70S ribosome, contacting the 23S rRNA.

Its function is as follows. One of the primary rRNA binding proteins, it binds directly to 16S rRNA where it helps nucleate assembly of the platform of the 30S subunit by binding and bridging several RNA helices of the 16S rRNA. Functionally, forms an intersubunit bridge (bridge B4) with the 23S rRNA of the 50S subunit in the ribosome. In Clostridium kluyveri (strain NBRC 12016), this protein is Small ribosomal subunit protein uS15.